The primary structure comprises 1318 residues: Major tegument protein (1318 aa).

This sequence belongs to the herpesviridae MTP family. In terms of assembly, interacts with host DAXX; this interaction disrupts the chromatin remodeling complex ATRX:DAXX and thus allows viral transcription. Interacts with host SMC6; this interaction targets SMC5-SMC6 complex for proteasomal degradation.

It is found in the virion tegument. It localises to the host nucleus. Functionally, tegument protein that plays a role in the inhibition of host intrinsic defenses to promote viral early gene activation. Interacts with host DAXX and thereby disrupts the complex between DAXX and ATRX. Suppresses the DAXX-ATRX dependent deposition of histone H3.3 on viral chromatin allowing viral transcription. Targets also host SMC5/6 for proteasomal degradation in a CUL7 and calpain-dependent manner to support nuclear membrane-less replication compartment formation and lytic virus replication. The chain is Major tegument protein from Epstein-Barr virus (strain GD1) (HHV-4).